The sequence spans 83 residues: RNA-binding protein Hfq (83 aa).

Positions 9–68 (DPYLNALRKERIPVSIFLVNGIKLQGQIESFDQFVILLKNTVSQMVYKHAISTVVPARNV) constitute a Sm domain.

It belongs to the Hfq family. In terms of assembly, homohexamer.

RNA chaperone that binds small regulatory RNA (sRNAs) and mRNAs to facilitate mRNA translational regulation in response to envelope stress, environmental stress and changes in metabolite concentrations. Also binds with high specificity to tRNAs. In Hahella chejuensis (strain KCTC 2396), this protein is RNA-binding protein Hfq.